We begin with the raw amino-acid sequence, 521 residues long: Bifunctional purine biosynthesis protein PurH (521 aa).

The 145-residue stretch at 1-145 (MIKQALISVS…KNHRDVTVVV (145 aa)) folds into the MGS-like domain.

It belongs to the PurH family.

It catalyses the reaction (6R)-10-formyltetrahydrofolate + 5-amino-1-(5-phospho-beta-D-ribosyl)imidazole-4-carboxamide = 5-formamido-1-(5-phospho-D-ribosyl)imidazole-4-carboxamide + (6S)-5,6,7,8-tetrahydrofolate. The catalysed reaction is IMP + H2O = 5-formamido-1-(5-phospho-D-ribosyl)imidazole-4-carboxamide. The protein operates within purine metabolism; IMP biosynthesis via de novo pathway; 5-formamido-1-(5-phospho-D-ribosyl)imidazole-4-carboxamide from 5-amino-1-(5-phospho-D-ribosyl)imidazole-4-carboxamide (10-formyl THF route): step 1/1. It functions in the pathway purine metabolism; IMP biosynthesis via de novo pathway; IMP from 5-formamido-1-(5-phospho-D-ribosyl)imidazole-4-carboxamide: step 1/1. In Burkholderia vietnamiensis (strain G4 / LMG 22486) (Burkholderia cepacia (strain R1808)), this protein is Bifunctional purine biosynthesis protein PurH.